A 130-amino-acid polypeptide reads, in one-letter code: Small ribosomal subunit protein uS9 (130 aa).

Basic and acidic residues predominate over residues 101-110 (AGFLTRDPRM). Residues 101–130 (AGFLTRDPRMKERKKYGLKKARRAPQFSKR) form a disordered region. Residues 111–130 (KERKKYGLKKARRAPQFSKR) are compositionally biased toward basic residues.

The protein belongs to the universal ribosomal protein uS9 family.

This is Small ribosomal subunit protein uS9 from Clostridium tetani (strain Massachusetts / E88).